The primary structure comprises 159 residues: 2-C-methyl-D-erythritol 2,4-cyclodiphosphate synthase (159 aa).

Asp-8 and His-10 together coordinate a divalent metal cation. Residues 8–10 (DVH) and 34–35 (HS) each bind 4-CDP-2-C-methyl-D-erythritol 2-phosphate. His-42 is an a divalent metal cation binding site. 4-CDP-2-C-methyl-D-erythritol 2-phosphate is bound by residues 56–58 (DIG), 61–65 (FPDTD), 100–106 (AQAPKML), 132–135 (TTTE), Phe-139, and Arg-142.

This sequence belongs to the IspF family. In terms of assembly, homotrimer. The cofactor is a divalent metal cation.

It catalyses the reaction 4-CDP-2-C-methyl-D-erythritol 2-phosphate = 2-C-methyl-D-erythritol 2,4-cyclic diphosphate + CMP. It participates in isoprenoid biosynthesis; isopentenyl diphosphate biosynthesis via DXP pathway; isopentenyl diphosphate from 1-deoxy-D-xylulose 5-phosphate: step 4/6. Functionally, involved in the biosynthesis of isopentenyl diphosphate (IPP) and dimethylallyl diphosphate (DMAPP), two major building blocks of isoprenoid compounds. Catalyzes the conversion of 4-diphosphocytidyl-2-C-methyl-D-erythritol 2-phosphate (CDP-ME2P) to 2-C-methyl-D-erythritol 2,4-cyclodiphosphate (ME-CPP) with a corresponding release of cytidine 5-monophosphate (CMP). The protein is 2-C-methyl-D-erythritol 2,4-cyclodiphosphate synthase of Citrobacter koseri (strain ATCC BAA-895 / CDC 4225-83 / SGSC4696).